Consider the following 316-residue polypeptide: uncharacterized protein (316 aa).

It belongs to the asfivirus F317L family.

The protein localises to the virion. This is an uncharacterized protein from Ornithodoros (relapsing fever ticks).